The primary structure comprises 292 residues: Protoheme IX farnesyltransferase (292 aa).

8 helical membrane passes run 15-35 (YLVL…LGGM), 49-69 (FWTL…NMVI), 104-124 (VFSL…LVAL), 147-167 (IGGI…SGSV), 171-191 (AIAL…VLAL), 218-238 (TLLY…TGLV), 242-262 (YFVV…KFFF), and 271-291 (LFFF…VDMV).

The protein belongs to the UbiA prenyltransferase family. Protoheme IX farnesyltransferase subfamily.

It is found in the cell inner membrane. It carries out the reaction heme b + (2E,6E)-farnesyl diphosphate + H2O = Fe(II)-heme o + diphosphate. It functions in the pathway porphyrin-containing compound metabolism; heme O biosynthesis; heme O from protoheme: step 1/1. Functionally, converts heme B (protoheme IX) to heme O by substitution of the vinyl group on carbon 2 of heme B porphyrin ring with a hydroxyethyl farnesyl side group. This chain is Protoheme IX farnesyltransferase, found in Aquifex aeolicus (strain VF5).